The following is a 104-amino-acid chain: Type VII secretion system extracellular protein B (104 aa).

It belongs to the WXG100 family. Homodimer. When mixed with EsxA does not form heterodimers.

The protein resides in the secreted. Functionally, virulence factor that is important for the establishment of infection in the host. EsxB is required for EsxA synthesis as well as secretion. Mediates together with EsxA the release of S.aureus from the host cell. Also inhibits host cytokine production and thus modulates dendritic cell-mediated immunity. This is Type VII secretion system extracellular protein B from Staphylococcus aureus (strain Mu50 / ATCC 700699).